A 469-amino-acid chain; its full sequence is Cysteine--tRNA ligase (469 aa).

Zn(2+) is bound at residue C33. The 'HIGH' region motif lies at 35–45 (ATVQGLPHIGH). Zn(2+) contacts are provided by C211, H236, and E240. Positions 267-271 (KMSKS) match the 'KMSKS' region motif. An ATP-binding site is contributed by K270.

The protein belongs to the class-I aminoacyl-tRNA synthetase family. In terms of assembly, monomer. Zn(2+) is required as a cofactor.

It localises to the cytoplasm. The enzyme catalyses tRNA(Cys) + L-cysteine + ATP = L-cysteinyl-tRNA(Cys) + AMP + diphosphate. This is Cysteine--tRNA ligase (cysS) from Mycobacterium tuberculosis (strain CDC 1551 / Oshkosh).